We begin with the raw amino-acid sequence, 418 residues long: L-rhamnose isomerase (418 aa).

His-262, Asp-294, and Asp-296 together coordinate Mn(2+).

It belongs to the rhamnose isomerase family. Homotetramer. It depends on Mn(2+) as a cofactor.

The protein localises to the cytoplasm. It catalyses the reaction L-rhamnopyranose = L-rhamnulose. The protein operates within carbohydrate degradation; L-rhamnose degradation; glycerone phosphate from L-rhamnose: step 1/3. In terms of biological role, catalyzes the interconversion of L-rhamnose and L-rhamnulose. The polypeptide is L-rhamnose isomerase (Yersinia pseudotuberculosis serotype O:1b (strain IP 31758)).